The following is a 239-amino-acid chain: 7-cyano-7-deazaguanine synthase (239 aa).

L8–L18 is an ATP binding site. The Zn(2+) site is built by C188, C196, C199, and C202.

Belongs to the QueC family. Zn(2+) is required as a cofactor.

The enzyme catalyses 7-carboxy-7-deazaguanine + NH4(+) + ATP = 7-cyano-7-deazaguanine + ADP + phosphate + H2O + H(+). It functions in the pathway purine metabolism; 7-cyano-7-deazaguanine biosynthesis. Functionally, catalyzes the ATP-dependent conversion of 7-carboxy-7-deazaguanine (CDG) to 7-cyano-7-deazaguanine (preQ(0)). In Picrophilus torridus (strain ATCC 700027 / DSM 9790 / JCM 10055 / NBRC 100828 / KAW 2/3), this protein is 7-cyano-7-deazaguanine synthase.